A 788-amino-acid chain; its full sequence is Protein translocase subunit SecA 2 (788 aa).

ATP contacts are provided by residues Gln-77, 95-99, and Asp-491; that span reads GEGKT.

It belongs to the SecA family. Monomer and homodimer. Part of the essential Sec protein translocation apparatus which comprises SecA, SecYEG and auxiliary proteins SecDF. Other proteins may also be involved.

Its subcellular location is the cell membrane. It localises to the cytoplasm. The catalysed reaction is ATP + H2O + cellular proteinSide 1 = ADP + phosphate + cellular proteinSide 2.. Functionally, part of the Sec protein translocase complex. Interacts with the SecYEG preprotein conducting channel. Has a central role in coupling the hydrolysis of ATP to the transfer of proteins into and across the cell membrane, serving as an ATP-driven molecular motor driving the stepwise translocation of polypeptide chains across the membrane. The sequence is that of Protein translocase subunit SecA 2 from Lactobacillus johnsonii (strain CNCM I-12250 / La1 / NCC 533).